The chain runs to 221 residues: Sugar transporter SWEET1 (221 aa).

A run of 7 helical transmembrane segments spans residues 3-23 (AGGF…LGMF), 42-62 (VQFL…SYGA), 68-88 (ILIV…LAYL), 96-116 (VVLL…GYFW), 129-149 (LGLF…ADLA), 160-180 (LSYP…LYGF), and 186-206 (YIMV…WLFW). Residues 10–94 (LIYGACVVFT…LAYLHYCPRK (85 aa)) enclose the MtN3/slv 1 domain. Residues 127–212 (QQLGLFCSVF…WLFWKYPQEQ (86 aa)) enclose the MtN3/slv 2 domain. The segment at 149 to 221 (AKVIQTKSTQ…QDRNYWLLQT (73 aa)) is mediates interaction with TRPV2.

This sequence belongs to the SWEET sugar transporter family. In terms of assembly, interacts with TRPV2; the interaction probably occurs intracellularly and depends on TRPV2 N-glycosylation. In terms of tissue distribution, ubiquitously expressed with highest expression in oviduct, epididymis and intestine.

Its subcellular location is the golgi apparatus membrane. It is found in the cell membrane. Functionally, mediates sugar transport across membranes. May stimulate V(D)J recombination by the activation of RAG1. The protein is Sugar transporter SWEET1 (SLC50A1) of Homo sapiens (Human).